The primary structure comprises 298 residues: Inosose dehydratase (298 aa).

The protein belongs to the IolE/MocC family. The cofactor is glutathione. Requires Co(2+) as cofactor. Mn(2+) is required as a cofactor.

The enzyme catalyses scyllo-inosose = 3D-3,5/4-trihydroxycyclohexane-1,2-dione + H2O. In terms of biological role, catalyzes the dehydration of inosose (2-keto-myo-inositol, 2KMI or 2,4,6/3,5-pentahydroxycyclohexanone) to 3D-(3,5/4)-trihydroxycyclohexane-1,2-dione (D-2,3-diketo-4-deoxy-epi-inositol). The chain is Inosose dehydratase from Serratia proteamaculans (strain 568).